A 270-amino-acid chain; its full sequence is Phosphatidylglycerol--prolipoprotein diacylglyceryl transferase (270 aa).

Transmembrane regions (helical) follow at residues 10-30 (VAVA…LVGI), 56-76 (LIFW…VLFY), 92-112 (WKGG…AWWF), 120-140 (FFQL…AGRI), 175-195 (SQLY…NLYA), 202-222 (MAVS…VEFV), and 237-257 (VTMG…LIWL). Residue Arg139 coordinates a 1,2-diacyl-sn-glycero-3-phospho-(1'-sn-glycerol).

This sequence belongs to the Lgt family.

It localises to the cell inner membrane. It carries out the reaction L-cysteinyl-[prolipoprotein] + a 1,2-diacyl-sn-glycero-3-phospho-(1'-sn-glycerol) = an S-1,2-diacyl-sn-glyceryl-L-cysteinyl-[prolipoprotein] + sn-glycerol 1-phosphate + H(+). It participates in protein modification; lipoprotein biosynthesis (diacylglyceryl transfer). Functionally, catalyzes the transfer of the diacylglyceryl group from phosphatidylglycerol to the sulfhydryl group of the N-terminal cysteine of a prolipoprotein, the first step in the formation of mature lipoproteins. This chain is Phosphatidylglycerol--prolipoprotein diacylglyceryl transferase, found in Pseudomonas savastanoi pv. phaseolicola (strain 1448A / Race 6) (Pseudomonas syringae pv. phaseolicola (strain 1448A / Race 6)).